A 189-amino-acid chain; its full sequence is Glycerol-3-phosphate acyltransferase (189 aa).

The next 4 membrane-spanning stretches (helical) occupy residues 1–21 (MFWL…AIVL), 77–97 (LQEQ…PVYF), 111–131 (MLMG…LLTF), and 151–171 (LLAW…VMIV).

It belongs to the PlsY family. Probably interacts with PlsX.

Its subcellular location is the cell inner membrane. It carries out the reaction an acyl phosphate + sn-glycerol 3-phosphate = a 1-acyl-sn-glycero-3-phosphate + phosphate. It participates in lipid metabolism; phospholipid metabolism. Functionally, catalyzes the transfer of an acyl group from acyl-phosphate (acyl-PO(4)) to glycerol-3-phosphate (G3P) to form lysophosphatidic acid (LPA). This enzyme utilizes acyl-phosphate as fatty acyl donor, but not acyl-CoA or acyl-ACP. The protein is Glycerol-3-phosphate acyltransferase of Pseudomonas putida (strain W619).